The chain runs to 353 residues: Quinolinate synthase (353 aa).

The iminosuccinate site is built by His47 and Ser68. Cys113 provides a ligand contact to [4Fe-4S] cluster. Iminosuccinate-binding positions include 139-141 (YAN) and Ser156. Cys200 contributes to the [4Fe-4S] cluster binding site. Iminosuccinate contacts are provided by residues 226–228 (HPE) and Thr243. Cys297 lines the [4Fe-4S] cluster pocket.

This sequence belongs to the quinolinate synthase family. Type 1 subfamily. It depends on [4Fe-4S] cluster as a cofactor.

The protein resides in the cytoplasm. It carries out the reaction iminosuccinate + dihydroxyacetone phosphate = quinolinate + phosphate + 2 H2O + H(+). The protein operates within cofactor biosynthesis; NAD(+) biosynthesis; quinolinate from iminoaspartate: step 1/1. Catalyzes the condensation of iminoaspartate with dihydroxyacetone phosphate to form quinolinate. The sequence is that of Quinolinate synthase from Yersinia pestis bv. Antiqua (strain Antiqua).